Consider the following 1601-residue polypeptide: Rap guanine nucleotide exchange factor 6 (1601 aa).

Methionine 1 is subject to N-acetylmethionine. Disordered regions lie at residues 1-22 (MNSP…ERTP) and 179-250 (PHPQ…QGRD). Phosphoserine is present on serine 3. A compositionally biased stretch (low complexity) spans 187–205 (SSSQSGCSIASDSGSSSLS). The span at 228-241 (VDSEDDEEEDEEID) shows a compositional bias: acidic residues. 280 to 399 (AFANMTMSVR…VEEEGEIVMV (120 aa)) contributes to the a nucleoside 3',5'-cyclic phosphate binding site. An N-terminal Ras-GEF domain is found at 412 to 526 (KGHIVIKATP…LLNIACAAKA (115 aa)). One can recognise a PDZ domain in the interval 530 to 615 (QVVLQKASRE…LTVKTNIFVF (86 aa)). A Ras-associating domain is found at 749 to 835 (PDQVIRVFKV…GRYYLKNNME (87 aa)). The region spanning 860–1088 (STIEVATQLS…LDVQGGAHKK (229 aa)) is the Ras-GEF domain. Disordered stretches follow at residues 1192-1274 (IRKK…SRSS), 1302-1324 (ESTG…QHGP), 1455-1478 (LEST…VYKT), and 1571-1601 (QRHN…VSAV). Composition is skewed to low complexity over residues 1229–1238 (SVASSLHSSP) and 1255–1274 (SAKS…SRSS). Positions 1586–1601 (TDADSEADENEQVSAV) are enriched in acidic residues.

Interacts with the second PDZ domain of human PTP1e. As to expression, isoform 3 has highest expression levels in the brain, heart, liver, lung and placenta and is barely detectable in skeletal muscle, kidney and pancreas.

Its subcellular location is the cytoplasm. It localises to the cell membrane. Functionally, guanine nucleotide exchange factor (GEF) for Rap1A, Rap2A and M-Ras GTPases. Does not interact with cAMP. In Homo sapiens (Human), this protein is Rap guanine nucleotide exchange factor 6 (RAPGEF6).